A 533-amino-acid chain; its full sequence is Beta-1,4 N-acetylgalactosaminyltransferase 1 (533 aa).

Over 1-7 (MRLDRRA) the chain is Cytoplasmic. Residues 8–25 (LYALVLLLACASLGLLYA) form a helical; Signal-anchor for type II membrane protein membrane-spanning segment. At 26-533 (STRDAPGLPN…KHRLQCMTAE (508 aa)) the chain is on the lumenal side. 2 N-linked (GlcNAc...) asparagine glycosylation sites follow: N79 and N274. C429 and C476 are disulfide-bonded.

This sequence belongs to the glycosyltransferase 2 family. Homodimer; disulfide-linked. Strongly expressed in brain, testis, spleen, and to a lesser extent in liver.

The protein resides in the golgi apparatus membrane. The catalysed reaction is a ganglioside GM3 (d18:1(4E)) + UDP-N-acetyl-alpha-D-galactosamine = a ganglioside GM2 (d18:1(4E)) + UDP + H(+). It catalyses the reaction a ganglioside GD3 (d18:1(4E)) + UDP-N-acetyl-alpha-D-galactosamine = a ganglioside GD2 (d18:1(4E)) + UDP + H(+). It carries out the reaction a ganglioside GM3 + UDP-N-acetyl-alpha-D-galactosamine = a ganglioside GM2 + UDP + H(+). The enzyme catalyses a ganglioside GD3 + UDP-N-acetyl-alpha-D-galactosamine = a ganglioside GD2 + UDP + H(+). The catalysed reaction is a ganglioside GD1a + UDP-N-acetyl-alpha-D-galactosamine = a ganglioside GalNAc-GD1a + UDP + H(+). It catalyses the reaction a ganglioside GT3 (d18:1(4E)) + UDP-N-acetyl-alpha-D-galactosamine = a ganglioside GT2 (d18:1(4E)) + UDP + H(+). It carries out the reaction a beta-D-Gal-(1-&gt;4)-beta-D-Glc-(1&lt;-&gt;1)-Cer(d18:1(4E)) + UDP-N-acetyl-alpha-D-galactosamine = a ganglioside GA2 (d18:1(4E)) + UDP + H(+). The enzyme catalyses a neolactoside IV(3)-alpha-NeuGc-nLc4Cer + UDP-N-acetyl-alpha-D-galactosamine = a neolactoside IV(4)-beta-GalNAc-IV(3)-alpha-NeuGc-nLc4Cer + UDP + H(+). It participates in sphingolipid metabolism. Functionally, involved in the biosynthesis of gangliosides GM2, GD2, GT2 and GA2 from GM3, GD3, GT3 and GA3, respectively. This Rattus norvegicus (Rat) protein is Beta-1,4 N-acetylgalactosaminyltransferase 1.